Reading from the N-terminus, the 471-residue chain is Ubiquitin-conjugating enzyme E2 variant 3 (471 aa).

Residues 2–145 (EFDCEGLRRL…QEELPMYSLS (144 aa)) form the UEV domain. NAD(+) is bound at residue 191-219 (GELGIACTLAISAKGIADRLVLLDLSEGT).

It in the N-terminal section; belongs to the ubiquitin-conjugating enzyme family. UEV subfamily. In the C-terminal section; belongs to the LDH/MDH superfamily. As to quaternary structure, homodimer. In terms of tissue distribution, colon, colon carcinoma cell lines, normal cervical epithelium, carcinomas of the uterine cervix and peripheral blood leukocytes.

In terms of biological role, possible negative regulator of polyubiquitination. The polypeptide is Ubiquitin-conjugating enzyme E2 variant 3 (Homo sapiens (Human)).